A 365-amino-acid chain; its full sequence is Terpene cyclase DEP1 (365 aa).

8 helical membrane-spanning segments follow: residues 10–30 (LYLS…NGMF), 82–102 (LLFF…LIES), 116–136 (AWAM…IYLY), 158–178 (LPII…PAWF), 188–208 (ALIA…VGIT), 233–253 (LILA…GALF), 297–317 (LFSQ…AQLL), and 338–358 (MIYL…SFAL).

This sequence belongs to the membrane-bound ascI terpene cyclase family.

It localises to the membrane. Its pathway is polyketide biosynthesis. Its function is as follows. Part of the gene cluster that mediates the biosynthesis of depudecin, a highly oxidized eleven-carbon linear polyketide that acts as a histone deacetylase (HDAC) inhibitor and makes a small contribution to pathogenesis. The reducing polyketide synthase DEP5 is the central enzyme in depudecin biosynthesis by yielding the backbone polyketide chain. The monooxygenases DEP2 and DEP4, as well as the uncharacterized protein DEP1, then act as tailoring enzymes to modify the intermediate polyketide chain into depudecin. The sequence is that of Terpene cyclase DEP1 from Fusarium langsethiae.